A 518-amino-acid polypeptide reads, in one-letter code: Glutamate--cysteine ligase (518 aa).

It belongs to the glutamate--cysteine ligase type 1 family. Type 1 subfamily.

It catalyses the reaction L-cysteine + L-glutamate + ATP = gamma-L-glutamyl-L-cysteine + ADP + phosphate + H(+). The protein operates within sulfur metabolism; glutathione biosynthesis; glutathione from L-cysteine and L-glutamate: step 1/2. In Shigella flexneri serotype 5b (strain 8401), this protein is Glutamate--cysteine ligase.